We begin with the raw amino-acid sequence, 116 residues long: MSYKEKSVRIAVYGTLRKGKPLHWYLKGAKFLGEDWIEGYQLYFEYLPYAVKGKGKLKVEVYEVDKETFERINEIEIGTGYRLVEVSTKFGKAFLWEWGSKPRGKRIKSGDFDEIR.

Position 13 to 16 (13 to 16 (YGTL)) interacts with substrate. Catalysis depends on Glu-76, which acts as the Proton acceptor.

This sequence belongs to the gamma-glutamylcyclotransferase family.

Putative gamma-glutamylcyclotransferase. The sequence is that of Putative gamma-glutamylcyclotransferase PH0828 from Pyrococcus horikoshii (strain ATCC 700860 / DSM 12428 / JCM 9974 / NBRC 100139 / OT-3).